We begin with the raw amino-acid sequence, 155 residues long: Small ribosomal subunit protein uS7 (155 aa).

It belongs to the universal ribosomal protein uS7 family. As to quaternary structure, part of the 30S ribosomal subunit. Contacts proteins S9 and S11.

In terms of biological role, one of the primary rRNA binding proteins, it binds directly to 16S rRNA where it nucleates assembly of the head domain of the 30S subunit. Is located at the subunit interface close to the decoding center, probably blocks exit of the E-site tRNA. This Chlorobium phaeobacteroides (strain BS1) protein is Small ribosomal subunit protein uS7.